Consider the following 1556-residue polypeptide: Bromodomain adjacent to zinc finger domain protein 1A (1556 aa).

Positions 1-128 (MPLLHRKPFV…EETVEVIRNN (128 aa)) are required for interaction with the CHRAC1-POLE3 heterodimer. Required for interaction with the CHRAC1-POLE3 heterodimer. Positions 1 to 133 (MPLLHRKPFV…VIRNNGARLQ (133 aa)) are required for interaction with NCOR1. Positions 22 to 128 (EEVFYCKVTN…EETVEVIRNN (107 aa)) constitute a WAC domain. Serine 270 is subject to Phosphoserine. Residues 306 to 397 (KERDKLLKQE…YVEYLKQWSK (92 aa)) adopt a coiled-coil conformation. The region spanning 422 to 487 (PEIFGDALMV…LTAIFQAIAE (66 aa)) is the DDT domain. The stretch at 634–709 (IEDYVDILRQ…DISIGEEERE (76 aa)) forms a coiled coil. The segment covering 662 to 695 (EAAARIRKRKEEKLKEQEQKMKEKQEKLKEDEQR) has biased composition (basic and acidic residues). Disordered regions lie at residues 662–754 (EAAA…NGFK), 841–877 (PSSFQNNVQSQDPQVSTKTGEPLMSESTSNIDQGPRD), and 941–966 (FHFSDKPQPDSKPTYSRGRSSNAYDP). Positions 667–933 (IRKRKEEKLK…QEKSRICAQL (267 aa)) are required for interaction with SMARCA5 and formation of the CHRAC ISWI chromatin remodeling complex. Phosphoserine is present on serine 702. Residues 703–713 (IGEEEREDFDT) show a composition bias toward acidic residues. The span at 715 to 726 (IESKDTEQKELD) shows a compositional bias: basic and acidic residues. Acidic residues predominate over residues 727 to 736 (QDMVTEDEDD). Phosphothreonine is present on threonine 731. 2 stretches are compositionally biased toward polar residues: residues 842-872 (SSFQNNVQSQDPQVSTKTGEPLMSESTSNID) and 951-965 (SKPTYSRGRSSNAYD). Residue lysine 952 forms a Glycyl lysine isopeptide (Lys-Gly) (interchain with G-Cter in SUMO2) linkage. Phosphoserine is present on residues serine 960 and serine 961. The PHD-type zinc finger occupies 1148–1198 (NARCKICRKKGDAENMVLCDGCDRGHHTYCVRPKLKTVPEGDWFCPECRPK). 2 disordered regions span residues 1202–1376 (RRLS…NFPN) and 1399–1431 (LQESESKRRCRKRQSPEPSPVTLGRRSSGRQGG). A compositionally biased stretch (acidic residues) spans 1213 to 1258 (ESDEDVEDSMGGEDDEVDGDEEEGQSEEEEYEVEQDEDDSQEEEEV). Residues 1262-1276 (KRGRPQVRLPVKTRG) show a composition bias toward basic residues. Residues 1277 to 1312 (KLSSSFSSRGQQQEPGRYPSRSQQSTPKTTVSSKTG) are compositionally biased toward polar residues. Serine 1281, serine 1320, serine 1339, serine 1353, serine 1363, serine 1371, serine 1402, serine 1413, and serine 1417 each carry phosphoserine. Residues 1363 to 1374 (SANNTPENSPNF) show a composition bias toward polar residues. The region spanning 1430 to 1533 (GGVHELSAFE…AFFHIQAQKL (104 aa)) is the Bromo domain. A Phosphothreonine modification is found at threonine 1547.

It belongs to the WAL family. Component of the ACF-1 ISWI chromatin remodeling complex at least composed of SMARCA1 and BAZ1A, which regulates the spacing of histone octamers on the DNA template to facilitate access to DNA. Within the ACF-1 ISWI chromatin remodeling complex interacts with SMARCA1; the interaction is direct. Component of the ACF-5 ISWI chromatin remodeling complex (also called the ACF complex) at least composed of BAZ1A and SMARCA5/SNF2H, which regulates the spacing of histone octamers on the DNA template to facilitate access to DNA. Within the ACF-5 ISWI chromatin remodeling complex interacts with SMARCA5/SNF2H; the interaction is direct. Component of the CHRAC ISWI chromatin remodeling complex at least composed of SMARCA5/SNF2H, BAZ1A/ACF1, CHRAC1 and POLE3; the complex preferentially binds DNA through the CHRAC1-POLE3 heterodimer and possesses ATP-dependent nucleosome-remodeling activity. Within the complex interacts (via N-terminus) with POLE3-CHRAC1 heterodimer; the interaction is direct and is required for the complex to preferentially bind to DNA. Within the complex interacts with SMARCA5/SNF2H; the interaction is direct and promotes the interaction with the POLE3-CHRAC1 heterodimer. Interacts with NCOR1 (via its RD1 domain); the interaction corepresses a number of NCOR1-regulated genes. As to expression, highly expressed in testis and at low or undetectable levels in other tissues analyzed.

Its subcellular location is the nucleus. Regulatory subunit of the ATP-dependent ACF-1 and ACF-5 ISWI chromatin remodeling complexes, which form ordered nucleosome arrays on chromatin and slide edge- and center-positioned histone octamers away from their original location on the DNA template to facilitate access to DNA during DNA-templated processes such as DNA replication, transcription, and repair. Both complexes regulate the spacing of nucleosomes along the chromatin and have the ability to slide mononucleosomes to the center of a DNA template in an ATP-dependent manner. The ACF-1 ISWI chromatin remodeling complex has a lower ATP hydrolysis rate than the ACF-5 ISWI chromatin remodeling complex. Has a role in sensing the length of DNA which flank nucleosomes, which modulates the nucleosome spacing activity of the ACF-5 ISWI chromatin remodeling complex. Involved in DNA replication and together with SMARCA5/SNF2H is required for replication of pericentric heterochromatin in S-phase. May have a role in nuclear receptor-mediated transcription repression. In Homo sapiens (Human), this protein is Bromodomain adjacent to zinc finger domain protein 1A (BAZ1A).